The chain runs to 203 residues: GTP cyclohydrolase-2 (203 aa).

49-53 (RIHSE) is a binding site for GTP. Zn(2+) contacts are provided by Cys54, Cys65, and Cys67. GTP is bound by residues Gln70, 92-94 (EGR), and Thr114. The Proton acceptor role is filled by Asp126. Arg128 (nucleophile) is an active-site residue. The GTP site is built by Thr149 and Lys154.

Belongs to the GTP cyclohydrolase II family. Zn(2+) serves as cofactor.

It catalyses the reaction GTP + 4 H2O = 2,5-diamino-6-hydroxy-4-(5-phosphoribosylamino)-pyrimidine + formate + 2 phosphate + 3 H(+). It participates in cofactor biosynthesis; riboflavin biosynthesis; 5-amino-6-(D-ribitylamino)uracil from GTP: step 1/4. In terms of biological role, catalyzes the conversion of GTP to 2,5-diamino-6-ribosylamino-4(3H)-pyrimidinone 5'-phosphate (DARP), formate and pyrophosphate. The protein is GTP cyclohydrolase-2 of Shewanella oneidensis (strain ATCC 700550 / JCM 31522 / CIP 106686 / LMG 19005 / NCIMB 14063 / MR-1).